The chain runs to 349 residues: Draxin (349 aa).

Positions 1 to 25 are cleaved as a signal peptide; sequence MAGPAIHTAPMLFLVLLLPLELSLA. 3 disordered regions span residues 38-79, 118-145, and 244-273; these read PENH…QDGA, PYPE…RRDR, and DGWP…EGEP. Basic and acidic residues predominate over residues 120-131; it reads PEKENRPPGWER. 2 stretches are compositionally biased toward basic residues: residues 132–145 and 249–258; these read TRKR…RRDR and AKKKEKHRGK. An N-linked (GlcNAc...) asparagine glycan is attached at asparagine 264.

The protein belongs to the draxin family. As to quaternary structure, interacts with LRP6.

Its subcellular location is the secreted. Functionally, chemorepulsive axon guidance protein required for the development of spinal cord and forebrain commissures. Acts as a chemorepulsive guidance protein for commissural axons during development. Able to inhibit or repel neurite outgrowth from dorsal spinal cord. Inhibits the stabilization of cytosolic beta-catenin (CTNNB1) via its interaction with LRP6, thereby acting as an antagonist of Wnt signaling pathway. This Homo sapiens (Human) protein is Draxin.